The following is a 468-amino-acid chain: Na(+)/H(+) antiporter NhaA 2 (468 aa).

11 helical membrane passes run 31-51 (FLHV…VALA), 82-102 (LHFW…GLEI), 118-138 (VLPV…YLAL), 147-167 (GWGV…ALLG), 176-196 (VLLL…IAVF), 199-219 (SSIS…VLAL), 226-246 (SPVV…SAGV), 321-341 (PWVA…VSLG), 353-373 (LLLG…MVAC), 393-413 (VLVV…VAGL), and 422-442 (GVAK…AMAV).

Belongs to the NhaA Na(+)/H(+) (TC 2.A.33) antiporter family.

The protein resides in the cell inner membrane. It catalyses the reaction Na(+)(in) + 2 H(+)(out) = Na(+)(out) + 2 H(+)(in). Functionally, na(+)/H(+) antiporter that extrudes sodium in exchange for external protons. This is Na(+)/H(+) antiporter NhaA 2 from Sorangium cellulosum (strain So ce56) (Polyangium cellulosum (strain So ce56)).